The sequence spans 37 residues: Cytochrome b6-f complex subunit 5 (37 aa).

The helical transmembrane segment at 5–25 (LLFGIVLGLIPITLAGLFVTA) threads the bilayer.

This sequence belongs to the PetG family. The 4 large subunits of the cytochrome b6-f complex are cytochrome b6, subunit IV (17 kDa polypeptide, PetD), cytochrome f and the Rieske protein, while the 4 small subunits are PetG, PetL, PetM and PetN. The complex functions as a dimer.

It localises to the plastid. The protein localises to the chloroplast thylakoid membrane. Its function is as follows. Component of the cytochrome b6-f complex, which mediates electron transfer between photosystem II (PSII) and photosystem I (PSI), cyclic electron flow around PSI, and state transitions. PetG is required for either the stability or assembly of the cytochrome b6-f complex. The sequence is that of Cytochrome b6-f complex subunit 5 from Lemna minor (Common duckweed).